Here is a 154-residue protein sequence, read N- to C-terminus: Ribosome maturation factor RimP (154 aa).

This sequence belongs to the RimP family.

The protein resides in the cytoplasm. Its function is as follows. Required for maturation of 30S ribosomal subunits. This Prochlorococcus marinus (strain MIT 9313) protein is Ribosome maturation factor RimP.